The following is a 2051-amino-acid chain: Autophagy-related protein 2 (2051 aa).

Residues 31–121 (QALDLDNLNF…QDEQTAKNKK (91 aa)) form the Chorein N-terminal domain. Residues 108–117 (SKQEQDEQTA) are compositionally biased toward basic and acidic residues. 6 disordered regions span residues 108–129 (SKQEQDEQTAKNKKGTHKDGDE), 152–179 (RRLEKALAEEAQEALSESMSDSETDDDG), 297–331 (SLVKPQGPAPHDVPSTLRDMSGSMQSSVGGLDMSI), 363–384 (DTQYPEAEENVAGSSPLSTPRA), 419–466 (RSEP…ADTE), and 501–564 (PGGW…DTST). Composition is skewed to polar residues over residues 374 to 383 (AGSSPLSTPR) and 426 to 435 (PPTSFQPQTM). Residues 436-454 (PSGAVSPAPSEPSSSASSV) are compositionally biased toward low complexity.

Belongs to the ATG2 family.

Its subcellular location is the preautophagosomal structure membrane. It is found in the endoplasmic reticulum membrane. The enzyme catalyses a 1,2-diacyl-sn-glycero-3-phosphocholine(in) = a 1,2-diacyl-sn-glycero-3-phosphocholine(out). It catalyses the reaction a 1,2-diacyl-sn-glycero-3-phospho-L-serine(in) = a 1,2-diacyl-sn-glycero-3-phospho-L-serine(out). The catalysed reaction is a 1,2-diacyl-sn-glycero-3-phosphoethanolamine(in) = a 1,2-diacyl-sn-glycero-3-phosphoethanolamine(out). Lipid transfer protein required for autophagosome completion and peroxisome degradation. Tethers the edge of the isolation membrane (IM) to the endoplasmic reticulum (ER) and mediates direct lipid transfer from ER to IM for IM expansion. Atg-2 binds to the ER exit site (ERES), which is the membrane source for autophagosome formation, using basic residues in its N-terminal region (NR) and to the expanding edge of the IM through its C-terminal region. The latter binding is assisted by an atg-18-PtdIns3P interaction. Atg-2 then extracts phospholipids from the membrane source using its NR and transfers them to atg-9 to the IM through its predicted beta-sheet-rich structure for membrane expansion. The sequence is that of Autophagy-related protein 2 (apg-2) from Neurospora crassa (strain ATCC 24698 / 74-OR23-1A / CBS 708.71 / DSM 1257 / FGSC 987).